A 391-amino-acid chain; its full sequence is Putative 1-acyl-sn-glycerol-3-phosphate acyltransferase acl-12 (391 aa).

2 helical membrane-spanning segments follow: residues 47–67 (FFFM…SLLF) and 84–104 (LCAM…ATVT). An HXXXXD motif motif is present at residues 124–129 (HLGLLD).

It belongs to the 1-acyl-sn-glycerol-3-phosphate acyltransferase family.

It is found in the membrane. The enzyme catalyses a 1-acyl-sn-glycero-3-phosphate + an acyl-CoA = a 1,2-diacyl-sn-glycero-3-phosphate + CoA. The protein operates within phospholipid metabolism; CDP-diacylglycerol biosynthesis; CDP-diacylglycerol from sn-glycerol 3-phosphate: step 2/3. Converts lysophosphatidic acid (LPA) into phosphatidic acid by incorporating an acyl moiety at the sn-2 position of the glycerol backbone. In Caenorhabditis elegans, this protein is Putative 1-acyl-sn-glycerol-3-phosphate acyltransferase acl-12 (acl-12).